Here is a 223-residue protein sequence, read N- to C-terminus: Cytidylate kinase (223 aa).

Residue 10-18 participates in ATP binding; that stretch reads GPAGAGKST.

This sequence belongs to the cytidylate kinase family. Type 1 subfamily.

Its subcellular location is the cytoplasm. The enzyme catalyses CMP + ATP = CDP + ADP. The catalysed reaction is dCMP + ATP = dCDP + ADP. This is Cytidylate kinase from Exiguobacterium sibiricum (strain DSM 17290 / CCUG 55495 / CIP 109462 / JCM 13490 / 255-15).